A 1980-amino-acid chain; its full sequence is Unconventional myosin-IXb (1980 aa).

The residue at position 2 (serine 2) is an N-acetylserine. The region spanning 15 to 114 is the Ras-associating domain; it reads ATFHLHIYPQ…YYFLLQERNA (100 aa). Residues 146-954 form the Myosin motor domain; that stretch reads ADFDDLCNLP…ERQALQERLH (809 aa). Residue 239-246 participates in ATP binding; the sequence is GESGSGKT. The disordered stretch occupies residues 715 to 736; it reads GVSSPVTRSHVEELPRGANTPS. Residues serine 717 and serine 718 each carry the phosphoserine modification. An actin-binding region spans residues 845 to 856; it reads KAEPFFIRCIRS. The tract at residues 941 to 1045 is neck or regulatory domain; sequence LKETERQALQ…CRGHLQRRSF (105 aa). 4 IQ domains span residues 958–978, 981–1001, 1002–1024, and 1025–1054; these read LRRILLLQSWFRMVLERRHFV, KHAALTIQACWRSYRVRRTLE, RTRAAVYLQAAWRGYLQRQAYHH, and QRHSIIRLQSLCRGHLQRRSFSQMMLEKQK. Serine 1046 bears the Phosphoserine mark. Positions 1046-1980 are tail; it reads SQMMLEKQKA…ERAVRGAAEE (935 aa). Disordered stretches follow at residues 1049–1281, 1302–1380, and 1394–1449; these read MLEK…HPDT, SQSL…QGDS, and DKKP…NRKV. Residues 1097–1106 are compositionally biased toward polar residues; sequence TWMNSKSPNG. Serine 1108, serine 1115, and serine 1177 each carry phosphoserine. 2 stretches are compositionally biased toward basic and acidic residues: residues 1129–1177 and 1186–1195; these read ESHE…RKAS and EDTKEPREDG. Residues serine 1220, serine 1222, serine 1229, serine 1237, serine 1243, and serine 1247 each carry the phosphoserine modification. Residues 1235–1247 are compositionally biased toward low complexity; the sequence is RVSPVLPSSSLES. The segment covering 1250–1265 has biased composition (basic and acidic residues); that stretch reads DEDKGENSTKVQDKPE. A phosphoserine mark is found at serine 1266, serine 1268, and serine 1304. The residue at position 1319 (threonine 1319) is a Phosphothreonine. 3 positions are modified to phosphoserine: serine 1327, serine 1329, and serine 1337. The segment covering 1327-1344 has biased composition (polar residues); sequence SFSTSDVSKLSPVKTSTE. The Phorbol-ester/DAG-type zinc-finger motif lies at 1592-1641; it reads GHVFASYQVNIPQSCEQCLSYIWLMDKALLCSVCKMTCHKKCVHKIQSYC. Serine 1649 carries the phosphoserine modification. The region spanning 1663-1848 is the Rho-GAP domain; it reads DSLTSDKASV…MLIKEQMRKY (186 aa). The tract at residues 1699–1704 is interaction with RHOA; the sequence is AANRTR. A coiled-coil region spans residues 1841-1861; sequence IKEQMRKYKVKMEEINHLEAA. A Phosphoserine modification is found at serine 1886. The interval 1891–1923 is disordered; the sequence is VRTKSPRTPVVQDLEELGALPEEAAGGDEDREK. A coiled-coil region spans residues 1918–1948; that stretch reads DEDREKEILMERIQSIKEEKEDITYRLPELD. Residues serine 1932, serine 1952, and serine 1959 each carry the phosphoserine modification. The span at 1937 to 1953 shows a compositional bias: basic and acidic residues; that stretch reads KEDITYRLPELDPRGSD. The tract at residues 1937 to 1980 is disordered; sequence KEDITYRLPELDPRGSDEENLDSETSASTESLLEERAVRGAAEE. Threonine 1965 carries the phosphothreonine modification. Residues 1969–1980 show a composition bias toward basic and acidic residues; that stretch reads LEERAVRGAAEE.

Belongs to the TRAFAC class myosin-kinesin ATPase superfamily. Myosin family. Interacts (via IQ domains) with CALM. Interacts with RHOA. Interacts (via Rho-GAP domain) with ROBO1; this inhibits the interaction with RHOA and the stimulation of RHOA GTPase activity, and thereby increases the levels of active RHOA. As to expression, expressed in testis, lung, thymus, brain, liver, spleen and heart muscle. Detected in lung, testis, spleen and liver, and at reduced level in different brain regions (at protein level).

The protein localises to the cytoplasm. Its subcellular location is the cell cortex. The protein resides in the perinuclear region. It is found in the cytoskeleton. Its function is as follows. Myosins are actin-based motor molecules with ATPase activity. Unconventional myosins serve in intracellular movements. Binds actin with high affinity both in the absence and presence of ATP and its mechanochemical activity is inhibited by calcium ions. Also acts as a GTPase activator for RHOA. Plays a role in the regulation of cell migration via its role as RHOA GTPase activator. This is regulated by its interaction with the SLIT2 receptor ROBO1; interaction with ROBO1 impairs interaction with RHOA and subsequent activation of RHOA GTPase activity, and thereby leads to increased levels of active, GTP-bound RHOA. The chain is Unconventional myosin-IXb (Myo9b) from Rattus norvegicus (Rat).